The following is a 472-amino-acid chain: 3-isopropylmalate dehydratase large subunit (472 aa).

[4Fe-4S] cluster is bound by residues Cys347, Cys409, and Cys412.

The protein belongs to the aconitase/IPM isomerase family. LeuC type 1 subfamily. In terms of assembly, heterodimer of LeuC and LeuD. [4Fe-4S] cluster serves as cofactor.

The catalysed reaction is (2R,3S)-3-isopropylmalate = (2S)-2-isopropylmalate. The protein operates within amino-acid biosynthesis; L-leucine biosynthesis; L-leucine from 3-methyl-2-oxobutanoate: step 2/4. In terms of biological role, catalyzes the isomerization between 2-isopropylmalate and 3-isopropylmalate, via the formation of 2-isopropylmaleate. This chain is 3-isopropylmalate dehydratase large subunit, found in Salinibacter ruber (strain DSM 13855 / M31).